Here is a 158-residue protein sequence, read N- to C-terminus: Cyclic pyranopterin monophosphate synthase (158 aa).

Residues 75 to 77 (LCH) and 113 to 114 (ME) contribute to the substrate site. The active site involves Asp-128.

The protein belongs to the MoaC family. Homohexamer; trimer of dimers.

The enzyme catalyses (8S)-3',8-cyclo-7,8-dihydroguanosine 5'-triphosphate = cyclic pyranopterin phosphate + diphosphate. It functions in the pathway cofactor biosynthesis; molybdopterin biosynthesis. In terms of biological role, catalyzes the conversion of (8S)-3',8-cyclo-7,8-dihydroguanosine 5'-triphosphate to cyclic pyranopterin monophosphate (cPMP). The sequence is that of Cyclic pyranopterin monophosphate synthase from Ralstonia nicotianae (strain ATCC BAA-1114 / GMI1000) (Ralstonia solanacearum).